Consider the following 571-residue polypeptide: Potassium-transporting ATPase potassium-binding subunit (571 aa).

11 helical membrane-spanning segments follow: residues 5-25, 64-84, 136-156, 179-199, 254-274, 285-305, 330-350, 357-376, 421-441, 488-508, and 527-547; these read GWIQIALYGAIVLALVKPLGS, LAYTGAVILFHVLGFAVLYAI, GLTHQNFLSAATGIAVAVALI, LYVLLPICVPYTLFLVWQGIP, LSNLVQMVSIFAIGAALTNVF, WAILGAMGILFLAGVLVTYWA, FGIAASALFAVITTAASCGAV, FTALGGLIPLLNMQLGEIII, MLGILCLPLMMLGFTALATVV, LAIGMLVGRFFVKIPVLAIAG, and GGLFVGLLVGVILIIGGLTFF.

This sequence belongs to the KdpA family. The system is composed of three essential subunits: KdpA, KdpB and KdpC.

It localises to the cell inner membrane. In terms of biological role, part of the high-affinity ATP-driven potassium transport (or Kdp) system, which catalyzes the hydrolysis of ATP coupled with the electrogenic transport of potassium into the cytoplasm. This subunit binds the periplasmic potassium ions and delivers the ions to the membrane domain of KdpB through an intramembrane tunnel. In Methylobacterium radiotolerans (strain ATCC 27329 / DSM 1819 / JCM 2831 / NBRC 15690 / NCIMB 10815 / 0-1), this protein is Potassium-transporting ATPase potassium-binding subunit.